The chain runs to 269 residues: Formamidopyrimidine-DNA glycosylase (269 aa).

P2 functions as the Schiff-base intermediate with DNA in the catalytic mechanism. The active-site Proton donor is the E3. K57 serves as the catalytic Proton donor; for beta-elimination activity. DNA-binding residues include H90, R109, and K150. Residues 235 to 269 (QVYGRKGEPCRVCGTPIVATKHAQRATFYCRQCQK) form an FPG-type zinc finger. The active-site Proton donor; for delta-elimination activity is R259.

This sequence belongs to the FPG family. In terms of assembly, monomer. The cofactor is Zn(2+).

The catalysed reaction is Hydrolysis of DNA containing ring-opened 7-methylguanine residues, releasing 2,6-diamino-4-hydroxy-5-(N-methyl)formamidopyrimidine.. It catalyses the reaction 2'-deoxyribonucleotide-(2'-deoxyribose 5'-phosphate)-2'-deoxyribonucleotide-DNA = a 3'-end 2'-deoxyribonucleotide-(2,3-dehydro-2,3-deoxyribose 5'-phosphate)-DNA + a 5'-end 5'-phospho-2'-deoxyribonucleoside-DNA + H(+). Involved in base excision repair of DNA damaged by oxidation or by mutagenic agents. Acts as a DNA glycosylase that recognizes and removes damaged bases. Has a preference for oxidized purines, such as 7,8-dihydro-8-oxoguanine (8-oxoG). Has AP (apurinic/apyrimidinic) lyase activity and introduces nicks in the DNA strand. Cleaves the DNA backbone by beta-delta elimination to generate a single-strand break at the site of the removed base with both 3'- and 5'-phosphates. The polypeptide is Formamidopyrimidine-DNA glycosylase (Escherichia coli (strain K12 / MC4100 / BW2952)).